Consider the following 237-residue polypeptide: Putative ATP-binding protein BMEII0108 (237 aa).

One can recognise an ABC transporter domain in the interval 5–205 (ISFNNVVMRY…DLPYPRTEAI (201 aa)). 37 to 44 (GPSGCGKS) is a binding site for ATP.

This sequence belongs to the ABC transporter superfamily. The complex is composed of two ATP-binding proteins (BMEII0108), two transmembrane proteins (BMEII0107) and a solute-binding protein (BMEII0109).

Its subcellular location is the cell inner membrane. Probably part of an ABC transporter complex. Probably Responsible for energy coupling to the transport system. This chain is Putative ATP-binding protein BMEII0108, found in Brucella melitensis biotype 1 (strain ATCC 23456 / CCUG 17765 / NCTC 10094 / 16M).